The following is a 653-amino-acid chain: 4-alpha-glucanotransferase (653 aa).

Residue E123 is the Nucleophile of the active site. The Proton donor role is filled by D214.

The protein belongs to the glycosyl hydrolase 57 family.

The catalysed reaction is Transfers a segment of a (1-&gt;4)-alpha-D-glucan to a new position in an acceptor, which may be glucose or a (1-&gt;4)-alpha-D-glucan.. In Thermococcus kodakarensis (strain ATCC BAA-918 / JCM 12380 / KOD1) (Pyrococcus kodakaraensis (strain KOD1)), this protein is 4-alpha-glucanotransferase.